A 90-amino-acid polypeptide reads, in one-letter code: Small ribosomal subunit protein bS16 (90 aa).

Belongs to the bacterial ribosomal protein bS16 family.

The sequence is that of Small ribosomal subunit protein bS16 from Listeria innocua serovar 6a (strain ATCC BAA-680 / CLIP 11262).